A 281-amino-acid chain; its full sequence is MATNFLMHEKIWFDKFKYDDAERRFYEQMNGPVTAGSRQENGASVILRDIARARENIQKSLAGSSGPGASSGPGGDHSDLIVRIASLEVENQNLRGVVQDLQQAISKLEVRLSTLEKSSPTHRATAPQTQHVSPMRQVEPPAKKGATPAEDDEDNDIDLFGSDEEEEDKEAARLREERLRQYAEKKAKKPTLVAKSSILLDVKPWDDETDMAQLETCVRSIQLDGLVWGASKLVPVGYGIRKLQIQCVVEDDKVGTDLLEEEITKFEEHVQSVDIAAFNKI.

Ala2 is subject to N-acetylalanine. Lys17 carries the post-translational modification N6-acetyllysine. Residues Ser37, Ser44, Ser60, Ser86, and Ser106 each carry the phosphoserine modification. Residues Leu80–Leu115 are leucine-zipper. Position 107 is an N6-acetyllysine (Lys107). The segment covering Leu115–Val132 has biased composition (polar residues). The disordered stretch occupies residues Leu115–Ala172. Residue Lys117 is modified to N6-acetyllysine; alternate. Lys117 is subject to N6-succinyllysine; alternate. Ser119 is subject to Phosphoserine. A Phosphothreonine modification is found at Thr129. Ser133 carries the phosphoserine modification. Phosphothreonine is present on Thr147. Over residues Ala149–Lys169 the composition is skewed to acidic residues. At Ser162 the chain carries Phosphoserine; by CK2. The tract at residues Arg173–Ile281 is catalytic (GEF).

It belongs to the EF-1-beta/EF-1-delta family. As to quaternary structure, EF-1 is composed of 4 subunits: alpha, beta, delta isoform 1, and gamma. Isoform 2 interacts with HSF1 and NFE2L2.

The protein resides in the nucleus. EF-1-beta and EF-1-delta stimulate the exchange of GDP bound to EF-1-alpha to GTP, regenerating EF-1-alpha for another round of transfer of aminoacyl-tRNAs to the ribosome. Functionally, regulates induction of heat-shock-responsive genes through association with heat shock transcription factors and direct DNA-binding at heat shock promoter elements (HSE). The chain is Elongation factor 1-delta (Eef1d) from Rattus norvegicus (Rat).